We begin with the raw amino-acid sequence, 932 residues long: Alanine--tRNA ligase, mitochondrial (932 aa).

Positions 458-480 (SRLTWNTSSSSSDQTTQQTTQLP) are disordered. Positions 464-478 (TSSSSSDQTTQQTTQ) are enriched in low complexity. Residues His610, His614, Cys713, and His717 each contribute to the Zn(2+) site.

It belongs to the class-II aminoacyl-tRNA synthetase family. In terms of assembly, monomer. Zn(2+) is required as a cofactor.

It localises to the mitochondrion. It catalyses the reaction tRNA(Ala) + L-alanine + ATP = L-alanyl-tRNA(Ala) + AMP + diphosphate. Its function is as follows. Catalyzes the attachment of alanine to tRNA(Ala) in a two-step reaction: alanine is first activated by ATP to form Ala-AMP and then transferred to the acceptor end of tRNA(Ala). Also edits incorrectly charged tRNA(Ala) via its editing domain. The polypeptide is Alanine--tRNA ligase, mitochondrial (malaS) (Dictyostelium discoideum (Social amoeba)).